The following is a 243-amino-acid chain: MLLHLIYGPTCSGKTDMAIQIAQETGWPVVALDRVQCCPQIATGSGRPLESELQSTRRIYLDSRPLTEGILDAESAHRRLIFEVDWRKSEEGLILEGGSISLLNCMAKSPFWRSGFQWHVKRLRLGDSDAFLTRAKQRVAEMFAIREDRPSLLEELAELWNYPAARPILEDIDGYRCAIRFARKHDLAISQLPNIDAGRHVELIEAIANEYLEHALSQERDFPQWPEDGAGQPVCPVTLTRIR.

The enzyme catalyses dimethylallyl diphosphate + AMP = N(6)-(dimethylallyl)adenosine 5'-phosphate + diphosphate. Functionally, transfers dimethylallyl groups to AMP as part of the biosynthesis of cytokinin phytohormones. In Agrobacterium fabrum (strain C58 / ATCC 33970) (Agrobacterium tumefaciens (strain C58)), this protein is Adenylate dimethylallyltransferase (tzs).